The sequence spans 173 residues: T cell receptor gamma constant 1 (173 aa).

The 95-residue stretch at 10-104 (PKPTIFLPSI…NKNGVDQEII (95 aa)) folds into the Ig-like domain. A disulfide bridge connects residues Cys-32 and Cys-88. Asn-66, Asn-120, Asn-126, and Asn-135 each carry an N-linked (GlcNAc...) asparagine glycan. A helical transmembrane segment spans residues 139–161 (YYMYLLLLLKSVVYFAIITCCLL).

Gamma-delta TR is a heterodimer composed of a gamma and delta chain; disulfide-linked. The gamma-delta TR is associated with the transmembrane signaling CD3 coreceptor proteins following the stoichiometry: a single gamma-delta TR heterodimer associates with one CD3D-CD3E heterodimer, one CD3G-CD3E heterodimer and one CD247 homodimer forming a stable octameric structure. Upon activation, gamma-delta TR complex associates with FCER1G to initiate intracellular signaling.

Its subcellular location is the cell membrane. In terms of biological role, constant region of T cell receptor (TR) gamma chain that participates in the antigen recognition. Gamma-delta TRs recognize a variety of self and foreign non-peptide antigens frequently expressed at the epithelial boundaries between the host and external environment, including endogenous lipids presented by MH-like protein CD1D and phosphoantigens presented by butyrophilin-like molecule BTN3A1. Upon antigen recognition induces rapid, innate-like immune responses involved in pathogen clearance and tissue repair. Binding of gamma-delta TR complex to antigen triggers phosphorylation of immunoreceptor tyrosine-based activation motifs (ITAMs) in the CD3 chains by the LCK and FYN kinases, allowing the recruitment, phosphorylation, and activation of ZAP70 that facilitates phosphorylation of the scaffolding proteins LCP2 and LAT. This lead to the formation of a supramolecular signalosome that recruits the phospholipase PLCG1, resulting in calcium mobilization and ERK activation, ultimately leading to T cell expansion and differentiation into effector cells. Gamma-delta TRs are produced through somatic rearrangement of a limited repertoire of variable (V), diversity (D), and joining (J) genes. The potential diversity of gamma-delta TRs is conferred by the unique ability to rearrange (D) genes in tandem and to utilize all three reading frames. The combinatorial diversity is considerably increased by the sequence exonuclease trimming and random nucleotide (N) region additions which occur during the V-(D)-J rearrangements. This chain is T cell receptor gamma constant 1, found in Homo sapiens (Human).